Reading from the N-terminus, the 524-residue chain is Leucine-rich repeat-containing protein 1 (524 aa).

LRR repeat units follow at residues 11–34 (NRHV…IYRY), 35–58 (ARSL…FFQL), 60–81 (KLRK…IANF), 83–105 (QLVE…SFCK), 107–126 (LQVA…SFPE), 127–149 (LQNL…NIGN), 150–172 (LYNL…SLTQ), 173–196 (LRRL…IGAL), 198–218 (HLKD…EIGN), 219–242 (LKNL…ISGL), 244–264 (SLTD…GIGK), 265–288 (LKKL…VGEC), 290–310 (SLTE…SIGK), 311–334 (LKKL…IGGC), 336–356 (SLTV…EVSQ), 357–380 (ATEL…LTAL), and 382–405 (LKAL…TDYT). Thr480 carries the post-translational modification Phosphothreonine. The stretch at 484 to 512 (GELKHMKKTVENLRNDMNAAKGLDSNKNE) forms a coiled coil.

Interacts with DLG1 and DLG4. May form a complex with DLG1 and ERBIN, where interaction between LRRC1 and ERBIN is indirect. In terms of tissue distribution, expressed strongly in testis and placenta, followed by heart, lung, kidney, thyroid, trachea, colon, prostate and pancreas.

The protein localises to the cytoplasm. It localises to the membrane. The polypeptide is Leucine-rich repeat-containing protein 1 (LRRC1) (Homo sapiens (Human)).